Reading from the N-terminus, the 210-residue chain is Stress-response A/B barrel domain-containing protein DABB1 (210 aa).

2 Stress-response A/B barrel domains span residues 5 to 100 and 116 to 204; these read VEHV…AVDW and IGKI…VVEF.

Homodimer.

The protein localises to the cytoplasm. It localises to the cytosol. Functionally, involved in defense against fungal pathogens. Possesses antifungal activity against diverse pathogenic fungi. This is Stress-response A/B barrel domain-containing protein DABB1 from Arabidopsis thaliana (Mouse-ear cress).